We begin with the raw amino-acid sequence, 39 residues long: Natriuretic peptide NsNP-b (39 aa).

Positions 1–8 (SGSKTAKI) are excised as a propeptide. Cysteine 12 and cysteine 28 are disulfide-bonded. Positions 19–39 (RIGSTSGMGCGSVPKPTPGGS) are disordered.

The protein belongs to the natriuretic peptide family. Expressed by the venom gland.

Its subcellular location is the secreted. In terms of biological role, snake venom natriuretic peptide that targets both NPR1 and NPR2. Exhibits hypotensive and vasodepressor activities. The chain is Natriuretic peptide NsNP-b from Notechis scutatus scutatus (Mainland tiger snake).